The sequence spans 356 residues: GDSL esterase/lipase At2g36325 (356 aa).

The signal sequence occupies residues 1–26 (MNITKLTPWFLFSCLILLSDYIKVNS). An N-linked (GlcNAc...) asparagine glycan is attached at Asn25. Catalysis depends on Ser54, which acts as the Nucleophile. N-linked (GlcNAc...) asparagine glycans are attached at residues Asn165, Asn185, and Asn240. Active-site residues include Asp334 and His337.

Belongs to the 'GDSL' lipolytic enzyme family.

Its subcellular location is the secreted. This chain is GDSL esterase/lipase At2g36325, found in Arabidopsis thaliana (Mouse-ear cress).